We begin with the raw amino-acid sequence, 1984 residues long: Sodium channel protein type 9 subunit alpha (1984 aa).

Over 1–125 the chain is Cytoplasmic; that stretch reads MAMLPPPGPQ…RRISIKILVH (125 aa). Residues 26-39 show a composition bias toward basic and acidic residues; it reads RISEEKAKEHKDEK. The tract at residues 26-55 is disordered; it reads RISEEKAKEHKDEKKDDEEEGPKPSSDLEA. An I repeat occupies 112–410; sequence FSPLRRISIK…VAMAYEEQNQ (299 aa). The helical transmembrane segment at 126 to 145 threads the bilayer; the sequence is SLFSMLIMCTILTNCIFMTL. The Extracellular segment spans residues 146-150; that stretch reads SNPPE. A helical transmembrane segment spans residues 151-172; sequence WTKNVEYTFTGIYTFESLIKIL. At 173–185 the chain is on the cytoplasmic side; sequence ARGFCVGEFTFLR. Residues 186–204 form a helical membrane-spanning segment; it reads DPWNWLDFVVIVFAYLTEF. The Extracellular portion of the chain corresponds to 205–210; that stretch reads VNLGNV. An N-linked (GlcNAc...) asparagine glycan is attached at N209. A helical membrane pass occupies residues 211–227; sequence SALRTFRVLRALKTISV. Residues 228–241 lie on the Cytoplasmic side of the membrane; that stretch reads IPGLKTIVGALIQS. The chain crosses the membrane as a helical span at residues 242–267; it reads VKKLSDVMILTVFCLSVFALIGLQLF. At 268-346 the chain is on the extracellular side; sequence MGNLKHKCFR…PDYGYTSFDT (79 aa). A disulfide bridge links C275 with C324. N283 is a glycosylation site (N-linked (GlcNAc...) asparagine). The pore-forming intramembrane region spans 347–363; the sequence is FSWAFLALFRLMTQDYW. The Extracellular segment spans residues 364–376; sequence ENLYQQTLRAAGK. Residues 377–402 traverse the membrane as a helical segment; the sequence is TYMIFFVVVIFLGSFYLINLILAVVA. Over 403 to 744 the chain is Cytoplasmic; sequence MAYEEQNQAN…LIYFIVMDPF (342 aa). Low complexity predominate over residues 461 to 471; it reads SSSETSRLSSK. Disordered regions lie at residues 461–542 and 576–609; these read SSSE…RGSL and IFGDNESRRGSLFVPHRPRERRSSNISQASRSPP. Basic residues predominate over residues 474–486; sequence KERRNRRKKKKQK. Residues 489–509 show a composition bias toward basic and acidic residues; sequence SGEEKGDDEKLSKSGSEESIR. The stretch at 725–988 is one II repeat; that stretch reads CSPYWIKFKK…EEDTDANNLQ (264 aa). Residues 745–761 form a helical membrane-spanning segment; the sequence is VDLAITICIVLNTLFMA. Topologically, residues 762-770 are extracellular; it reads MEHHPMTEE. The chain crosses the membrane as a helical span at residues 771 to 795; it reads FKNVLAVGNLIFTGIFAAEMVLKLI. Residues 796 to 804 lie on the Cytoplasmic side of the membrane; the sequence is AMDPYEYFQ. A helical transmembrane segment spans residues 805 to 821; the sequence is VGWNIFDSLIVTLSLIE. The Extracellular portion of the chain corresponds to 822-830; the sequence is LFLADVEGL. A helical transmembrane segment spans residues 831-847; sequence SVLRSFRLLRVFKLAKS. At 848–864 the chain is on the cytoplasmic side; it reads WPTLNMLIKIIGNSVGA. A helical membrane pass occupies residues 865-887; it reads LGNLTLVLAIIVFIFAVVGMQLF. Residues 888–914 are Extracellular-facing; it reads GKSYKECVCKINVDCKLPRWHMNDFFH. A disulfide bridge links C896 with C902. The segment at residues 915-927 is an intramembrane region (pore-forming); that stretch reads SFLIVFRVLCGEW. The Extracellular portion of the chain corresponds to 928-939; sequence IETMWDCMEVAG. A disulfide bridge links C934 with C943. The helical transmembrane segment at 940-966 threads the bilayer; that stretch reads QTMCLIVYMMVMVIGNLVVLNLFLALL. At 967–1185 the chain is on the cytoplasmic side; it reads LSSFSSDNLT…WWTIRKTCYR (219 aa). Disordered regions lie at residues 1015–1040 and 1103–1145; these read KKPKGSKDTKRTADPNNKKENYISNR and EELS…EPVN. Over residues 1019–1035 the composition is skewed to basic and acidic residues; it reads GSKDTKRTADPNNKKEN. Residues 1135-1145 are compositionally biased toward acidic residues; sequence GEEEAEAEPVN. Residues 1178–1486 form an III repeat; sequence TIRKTCYRIV…KKYYNAMKKL (309 aa). A helical transmembrane segment spans residues 1186–1210; that stretch reads IVEHSWFESFIVLMILLSSGALAFE. Residues 1211-1222 lie on the Extracellular side of the membrane; the sequence is DIYIEKKKTIKI. A helical membrane pass occupies residues 1223–1248; that stretch reads ILEYADKIFTYIFILEMLLKWVAYGY. The Cytoplasmic segment spans residues 1249 to 1250; that stretch reads KT. A helical membrane pass occupies residues 1251-1276; it reads YFTNAWCWLDFLIVDVSLVTLVANTL. Residues 1277–1285 lie on the Extracellular side of the membrane; that stretch reads GYSDLGPIK. Residues 1286–1302 form a helical membrane-spanning segment; that stretch reads SLRTLRALRPLRALSRF. Over 1303-1315 the chain is Cytoplasmic; sequence EGMRVVVNALIGA. A helical membrane pass occupies residues 1316–1340; the sequence is IPSIMNVLLVCLIFWLIFSIMGVNL. Over 1341 to 1392 the chain is Extracellular; that stretch reads FAGKFYECVNTTDGSRFPTSQVANRSECFALMNVSGNVRWKNLKVNFDNVGL. Cysteines 1348 and 1368 form a disulfide. 3 N-linked (GlcNAc...) asparagine glycosylation sites follow: N1350, N1364, and N1373. The pore-forming intramembrane region spans 1393–1403; sequence GYLSLLQVATF. Topologically, residues 1404 to 1429 are extracellular; that stretch reads KGWMDIMYAAVDSVNVNEQPKYEYSL. Residues 1430–1455 form a helical membrane-spanning segment; that stretch reads YMYIYFVIFIIFGSFFTLNLFIGVII. Topologically, residues 1456-1512 are cytoplasmic; sequence DNFNQQKKKLGGQDIFMTEEQKKYYNAMKKLGSKKPQKPIPRPGNKFQGCIFDLVTN. At S1488 the chain carries Phosphoserine; by PKC. One copy of the IV repeat lies at 1495–1793; that stretch reads IPRPGNKFQG…WEKFDPDATQ (299 aa). A helical membrane pass occupies residues 1513-1532; it reads QAFDITIMVLICLNMVTMMV. At 1533 to 1543 the chain is on the extracellular side; the sequence is EKEGQTEYMDY. The helical transmembrane segment at 1544–1565 threads the bilayer; sequence VLHWINMVFIILFTGECVLKLI. At 1566–1574 the chain is on the cytoplasmic side; that stretch reads SLRHYYFTV. A helical transmembrane segment spans residues 1575-1596; that stretch reads GWNIFDFVVVILSIVGMFLAEM. Residues 1597–1605 lie on the Extracellular side of the membrane; that stretch reads IEKYFVSPT. The chain crosses the membrane as a helical span at residues 1606–1625; that stretch reads LFRVIRLARIGRILRLIKGA. Over 1626–1638 the chain is Cytoplasmic; the sequence is KGIRTLLFALMMS. A helical transmembrane segment spans residues 1639–1661; the sequence is LPALFNIGLLLFLVMFIYAIFGM. The Extracellular segment spans residues 1662–1684; it reads SNFAYVKKEAGINDMFNFETFGN. Positions 1685–1697 form an intramembrane region, pore-forming; that stretch reads SMICLFQITTSAG. At 1698-1731 the chain is on the extracellular side; it reads WDGLLAPILNSAPPDCDPKKVHPGSSVEGDCGNP. C1713 and C1728 are oxidised to a cystine. The chain crosses the membrane as a helical span at residues 1732 to 1757; the sequence is SVGIFYFVSYIIISFLVVVNMYIAVI. Topologically, residues 1758–1984 are cytoplasmic; the sequence is LENFSVATEE…EDKEKDESRK (227 aa). Residues 1887 to 1916 enclose the IQ domain; the sequence is EEVSATIIQRAYRRYRLRQHVKNISSIYIK. Over residues 1916–1930 the composition is skewed to basic and acidic residues; the sequence is KDGDRDDDLPNKEDT. Positions 1916 to 1984 are disordered; it reads KDGDRDDDLP…EDKEKDESRK (69 aa). The span at 1946-1958 shows a compositional bias: polar residues; it reads VTASTISPPSYDS. The span at 1960 to 1984 shows a compositional bias: basic and acidic residues; it reads TKPDQEKYETDKTEKEDKEKDESRK.

It belongs to the sodium channel (TC 1.A.1.10) family. Nav1.7/SCN9A subfamily. As to quaternary structure, the Nav1.7 voltage-gated sodium channel consists of an ion-conducting alpha subunit SCN9A which is functional on its own regulated by one or more beta-1 (SCN1B), beta-2 (SCN2B), beta-3 (SCN3B) and beta-4 (SCN4B) subunits. SCN1B and SCN3B are non-covalently associated with SCN9A. SCN2B and SCN4B are disulfide-linked to SCN9A. SCN1B regulates channel inactivation. Interacts with NEDD4 and NEDD4L; regulates Nav1.7 activity most probably through ubiquitination and subsequent endocytosis. Interacts with TMEM233; modulates the gating properties of NaV1.7. Post-translationally, phosphorylation at Ser-1488 by PKC in a highly conserved cytoplasmic loop increases peak sodium currents. In terms of processing, ubiquitinated by NEDD4L; which may promote its endocytosis. Does not seem to be ubiquitinated by NEDD4. Ubiquitinated by NEDD4L; which may promote its endocytosis. In terms of tissue distribution, expressed at high level in the dorsal root ganglion and at much lower levels in the brain, sciatic nerve, nodose ganglia, heart, thyroid and adrenal glands and Schwann cells, but not in the cardiac and skeletal muscles, brain and liver.

It is found in the cell membrane. The protein localises to the cell projection. It localises to the neuron projection. Its subcellular location is the axon. The catalysed reaction is Na(+)(in) = Na(+)(out). Inhibited by the conotoxin GVIIJ. In terms of biological role, pore-forming subunit of Nav1.7, a voltage-gated sodium (Nav) channel that directly mediates the depolarizing phase of action potentials in excitable membranes. Navs, also called VGSCs (voltage-gated sodium channels) or VDSCs (voltage-dependent sodium channels), operate by switching between closed and open conformations depending on the voltage difference across the membrane. In the open conformation they allow Na(+) ions to selectively pass through the pore, along their electrochemical gradient. The influx of Na(+) ions provokes membrane depolarization, initiating the propagation of electrical signals throughout cells and tissues. Nav1.7 plays a crucial role in controlling the excitability and action potential propagation from nociceptor neurons, thereby contributing to the sensory perception of pain. The polypeptide is Sodium channel protein type 9 subunit alpha (Rattus norvegicus (Rat)).